Here is a 547-residue protein sequence, read N- to C-terminus: Probable hydroxyacid-oxoacid transhydrogenase, mitochondrial (547 aa).

It belongs to the iron-containing alcohol dehydrogenase family. Hydroxyacid-oxoacid transhydrogenase subfamily.

The protein localises to the mitochondrion. The catalysed reaction is (S)-3-hydroxybutanoate + 2-oxoglutarate = (R)-2-hydroxyglutarate + acetoacetate. It carries out the reaction 4-hydroxybutanoate + 2-oxoglutarate = (R)-2-hydroxyglutarate + succinate semialdehyde. Catalyzes the cofactor-independent reversible oxidation of gamma-hydroxybutyrate (GHB) to succinic semialdehyde (SSA) coupled to reduction of 2-ketoglutarate (2-KG) to D-2-hydroxyglutarate (D-2-HG). L-3-hydroxybutyrate (L-3-OHB) is also a substrate for HOT when using 2-KG as hydrogen acceptor, resulting in the formation of D-2-HG. In Dictyostelium discoideum (Social amoeba), this protein is Probable hydroxyacid-oxoacid transhydrogenase, mitochondrial (adhfe1).